A 516-amino-acid chain; its full sequence is Probable 2-methylcitrate dehydratase (516 aa).

It belongs to the PrpD family.

It carries out the reaction (2S,3S)-2-methylcitrate = 2-methyl-cis-aconitate + H2O. It functions in the pathway organic acid metabolism; propanoate degradation. Its function is as follows. Catalyzes the stereospecific dehydration of (2S,3S)-2-methylcitrate (2-MC) to yield the cis isomer of 2-methyl-aconitate. The polypeptide is Probable 2-methylcitrate dehydratase (PDH1) (Saccharomyces cerevisiae (strain ATCC 204508 / S288c) (Baker's yeast)).